Reading from the N-terminus, the 346-residue chain is L-malyl-CoA/beta-methylmalyl-CoA lyase (346 aa).

2 residues coordinate Mg(2+): E148 and D177. Residues 176-177 (VD) and 253-254 (LH) contribute to the substrate site.

Belongs to the HpcH/HpaI aldolase family. Requires Mg(2+) as cofactor. It depends on Mn(2+) as a cofactor.

The enzyme catalyses (S)-malyl-CoA = glyoxylate + acetyl-CoA. The catalysed reaction is (2R,3S)-beta-methylmalyl-CoA = propanoyl-CoA + glyoxylate. In terms of biological role, involved in the methylaspartate cycle. Catalyzes the reversible cleavage of beta-methylmalyl-CoA to propionyl-CoA and glyoxylate, as well as the reversible cleavage of (S)-malyl-CoA to acetyl-CoA and glyoxylate. In addition, it has a small malyl-CoA thioesterase activity. It can also catalyze the cleavage of (S)-citramalyl-CoA to acetyl-CoA and pyruvate. This chain is L-malyl-CoA/beta-methylmalyl-CoA lyase (citE1), found in Haloarcula marismortui (strain ATCC 43049 / DSM 3752 / JCM 8966 / VKM B-1809) (Halobacterium marismortui).